The sequence spans 284 residues: UPF0294 protein VV1_1880 (284 aa).

It belongs to the UPF0294 family.

Its subcellular location is the cytoplasm. The protein is UPF0294 protein VV1_1880 of Vibrio vulnificus (strain CMCP6).